Reading from the N-terminus, the 402-residue chain is Major outer membrane porin (402 aa).

The N-terminal stretch at 1–22 (MKKLLKSALLFAATGSALSLQA) is a signal peptide.

The protein belongs to the chlamydial porin (CP) (TC 1.B.2) family. In terms of assembly, part of a disulfide cross-linked outer membrane complex (COMC) composed of the major outer membrane porin, the small cysteine-rich protein (OmcA) and the large cysteine-rich periplasmic protein (OmcB).

It is found in the cell outer membrane. In terms of biological role, in elementary bodies (EBs, the infectious stage, which is able to survive outside the host cell) provides the structural integrity of the outer envelope through disulfide cross-links with the small cysteine-rich protein and the large cysteine-rich periplasmic protein. It has been described in publications as the Sarkosyl-insoluble COMC (Chlamydia outer membrane complex), and serves as the functional equivalent of peptidoglycan. Its function is as follows. Permits diffusion of specific solutes through the outer membrane. The protein is Major outer membrane porin (ompA) of Chlamydia psittaci (Chlamydophila psittaci).